A 250-amino-acid chain; its full sequence is Cyclopentanol dehydrogenase (250 aa).

NAD(+)-binding residues include Met18, Asp37, Asp63, Val64, Asn90, Tyr155, Lys159, Ile188, Thr190, and Thr193. Tyr155 serves as the catalytic Proton acceptor.

It belongs to the short-chain dehydrogenases/reductases (SDR) family.

The catalysed reaction is cyclopentanol + NAD(+) = cyclopentanone + NADH + H(+). It carries out the reaction cyclohexanol + NAD(+) = cyclohexanone + NADH + H(+). Its pathway is alcohol metabolism; cyclopentanol degradation; 5-valerolactone from cyclopentanol: step 1/2. Its function is as follows. Catalyzes the oxidation of cyclopentanol to cyclopentanone and cyclohexanol to cyclohexanone. The activity toward cyclohexanol is 60% that of cyclopentanol. This Comamonas sp. (strain NCIMB 9872) protein is Cyclopentanol dehydrogenase.